Consider the following 215-residue polypeptide: MNIILLGPPGAGKGTQAKKIAMRYGIPHISTGDMLREAVAAGTELGKKVKEIIEKGLLVPDDLMVAIVEDRLKKPDSAKGFILDGFPRTVQQAESLSGILGNLGKELDAVILIDAPEEVVVERISSRRVCPSCGKVYNLLTIKPKNDMLCDDCNIGLIQREDDKPATVRERYRVYMEKTAPVINYYSEHGSLITIDGSLDIEAVTEEIFKNLENL.

10–15 lines the ATP pocket; it reads GAGKGT. The NMP stretch occupies residues 30–59; sequence STGDMLREAVAAGTELGKKVKEIIEKGLLV. AMP contacts are provided by residues threonine 31, arginine 36, 57–59, 85–88, and glutamine 92; these read LLV and GFPR. The LID stretch occupies residues 126 to 163; that stretch reads SRRVCPSCGKVYNLLTIKPKNDMLCDDCNIGLIQREDD. Arginine 127 contacts ATP. Positions 130 and 133 each coordinate Zn(2+). Position 136–137 (136–137) interacts with ATP; the sequence is VY. Zn(2+) contacts are provided by cysteine 150 and cysteine 153. The AMP site is built by arginine 160 and arginine 171. Leucine 199 lines the ATP pocket.

The protein belongs to the adenylate kinase family. As to quaternary structure, monomer.

It localises to the cytoplasm. It carries out the reaction AMP + ATP = 2 ADP. Its pathway is purine metabolism; AMP biosynthesis via salvage pathway; AMP from ADP: step 1/1. Catalyzes the reversible transfer of the terminal phosphate group between ATP and AMP. Plays an important role in cellular energy homeostasis and in adenine nucleotide metabolism. The protein is Adenylate kinase of Kosmotoga olearia (strain ATCC BAA-1733 / DSM 21960 / TBF 19.5.1).